The sequence spans 298 residues: Probable endonuclease 4 (298 aa).

Zn(2+)-binding residues include His-69, His-111, Glu-146, Asp-180, His-183, His-215, Asp-228, His-230, and Glu-260.

It belongs to the AP endonuclease 2 family. Requires Zn(2+) as cofactor.

The catalysed reaction is Endonucleolytic cleavage to 5'-phosphooligonucleotide end-products.. In terms of biological role, endonuclease IV plays a role in DNA repair. It cleaves phosphodiester bonds at apurinic or apyrimidinic (AP) sites, generating a 3'-hydroxyl group and a 5'-terminal sugar phosphate. In Bacillus cereus (strain B4264), this protein is Probable endonuclease 4.